A 720-amino-acid polypeptide reads, in one-letter code: Engulfment and cell motility protein 3 (720 aa).

The ELMO domain maps to Glu-307–Leu-479. Residues Leu-541–Gly-663 form the PH domain.

Probably interacts directly with the SH3-domain of DOCK1 via its SH3-binding site. Part of a complex with DOCK1 and RAC1. Interacts with ADGRB3.

The protein localises to the cytoplasm. Involved in cytoskeletal rearrangements required for phagocytosis of apoptotic cells and cell motility. Acts in association with DOCK1 and CRK. Was initially proposed to be required in complex with DOCK1 to activate Rac Rho small GTPases. May enhance the guanine nucleotide exchange factor (GEF) activity of DOCK1. The protein is Engulfment and cell motility protein 3 (Elmo3) of Rattus norvegicus (Rat).